We begin with the raw amino-acid sequence, 311 residues long: MMKRLSSSDSVGGLISLCPTTSTDEQSPRRYGGREFQSMLEGYEEEEEAIVEERGHVGLSEKKRRLSINQVKALEKNFELENKLEPERKVKLAQELGLQPRQVAVWFQNRRARWKTKQLEKDYGVLKTQYDSLRHNFDSLRRDNESLLQEISKLKTKLNGGGGEEEEEENNAAVTTESDISVKEEEVSLPEKITEAPSSPPQFLEHSDGLNYRSFTDLRDLLPLKAAASSFAAAAGSSDSSDSSALLNEESSSNVTVAAPVTVPGGNFFQFVKMEQTEDHEDFLSGEEACEFFSDEQPPSLHWYSTVDHWN.

Over residues 1–10 the composition is skewed to polar residues; it reads MMKRLSSSDS. The tract at residues 1 to 32 is disordered; sequence MMKRLSSSDSVGGLISLCPTTSTDEQSPRRYG. The segment at 1–43 is interaction with ABI1; it reads MMKRLSSSDSVGGLISLCPTTSTDEQSPRRYGGREFQSMLEGY. A DNA-binding region (homeobox) is located at residues 59 to 118; sequence LSEKKRRLSINQVKALEKNFELENKLEPERKVKLAQELGLQPRQVAVWFQNRRARWKTKQ. The interval 119 to 154 is leucine-zipper; sequence LEKDYGVLKTQYDSLRHNFDSLRRDNESLLQEISKL. A disordered region spans residues 157-183; sequence KLNGGGGEEEEEENNAAVTTESDISVK. Positions 218–311 are interaction with ABI1; it reads LRDLLPLKAA…HWYSTVDHWN (94 aa).

It belongs to the HD-ZIP homeobox family. Class I subfamily. In terms of assembly, interacts with ABI1. In terms of processing, phosphorylated by PKA. Reversible inactivation of the binding to DNA by phosphorylation. In terms of tissue distribution, widely expressed.

Its subcellular location is the nucleus. Its function is as follows. Transcription activator that may act as growth regulators in response to water deficit. Interacts with the core sequence 5'-CAATTATTA-3' of promoters in response to ABA and in an ABI1-dependent manner. Involved in the negative regulation of the ABA signaling pathway. This chain is Homeobox-leucine zipper protein ATHB-6 (ATHB-6), found in Arabidopsis thaliana (Mouse-ear cress).